The chain runs to 189 residues: Pyridoxal 5'-phosphate synthase subunit PdxT (189 aa).

Residue glycine 47–serine 49 coordinates L-glutamine. Catalysis depends on cysteine 79, which acts as the Nucleophile. L-glutamine-binding positions include arginine 105 and isoleucine 132–arginine 133. Catalysis depends on charge relay system residues histidine 168 and glutamate 170.

It belongs to the glutaminase PdxT/SNO family. In terms of assembly, in the presence of PdxS, forms a dodecamer of heterodimers. Only shows activity in the heterodimer.

The catalysed reaction is aldehydo-D-ribose 5-phosphate + D-glyceraldehyde 3-phosphate + L-glutamine = pyridoxal 5'-phosphate + L-glutamate + phosphate + 3 H2O + H(+). The enzyme catalyses L-glutamine + H2O = L-glutamate + NH4(+). Its pathway is cofactor biosynthesis; pyridoxal 5'-phosphate biosynthesis. Functionally, catalyzes the hydrolysis of glutamine to glutamate and ammonia as part of the biosynthesis of pyridoxal 5'-phosphate. The resulting ammonia molecule is channeled to the active site of PdxS. The sequence is that of Pyridoxal 5'-phosphate synthase subunit PdxT from Methanocorpusculum labreanum (strain ATCC 43576 / DSM 4855 / Z).